The chain runs to 122 residues: Large ribosomal subunit protein uL14 (122 aa).

Belongs to the universal ribosomal protein uL14 family. Part of the 50S ribosomal subunit. Forms a cluster with proteins L3 and L19. In the 70S ribosome, L14 and L19 interact and together make contacts with the 16S rRNA in bridges B5 and B8.

Functionally, binds to 23S rRNA. Forms part of two intersubunit bridges in the 70S ribosome. The polypeptide is Large ribosomal subunit protein uL14 (Psychrobacter sp. (strain PRwf-1)).